The following is a 1304-amino-acid chain: DNA-directed RNA polymerase subunit beta' (1304 aa).

Zn(2+) contacts are provided by C60, C62, C75, and C78. The Mg(2+) site is built by D541, D543, and D545. Zn(2+) is bound by residues C887, C963, C970, and C973.

The protein belongs to the RNA polymerase beta' chain family. As to quaternary structure, the RNAP catalytic core consists of 2 alpha, 1 beta, 1 beta' and 1 omega subunit. When a sigma factor is associated with the core the holoenzyme is formed, which can initiate transcription. Requires Mg(2+) as cofactor. Zn(2+) serves as cofactor.

The catalysed reaction is RNA(n) + a ribonucleoside 5'-triphosphate = RNA(n+1) + diphosphate. Its function is as follows. DNA-dependent RNA polymerase catalyzes the transcription of DNA into RNA using the four ribonucleoside triphosphates as substrates. This is DNA-directed RNA polymerase subunit beta' from Acidothermus cellulolyticus (strain ATCC 43068 / DSM 8971 / 11B).